An 883-amino-acid polypeptide reads, in one-letter code: Sodium/sulfate cotransporter 2 (883 aa).

Transmembrane regions (helical) follow at residues 3–23 (FGWQ…VMAA), 30–50 (VTFT…VTVA), 60–80 (GLLT…TGGL), 106–126 (MCLS…PILI), 139–159 (LLIP…IGTS), and 185–205 (IFDI…FILL). RCK C-terminal domains are found at residues 211–295 (LPGN…EFGL), 317–401 (VFTP…SKNN), 406–491 (VRAV…FPGL), and 497–583 (EQVD…DKSF). 6 helical membrane-spanning segments follow: residues 600–620 (MVIG…GGLK), 624–644 (YIHL…TGCM), 657–677 (VYLT…TGVA), 693–713 (SDGA…ELLT), 774–794 (FAII…FILC), and 802–822 (VWIV…LYFL). The disordered stretch occupies residues 857–883 (QASRTGSDGTGSSDSPRALGVPKVITA). Low complexity predominate over residues 861-871 (TGSDGTGSSDS).

Belongs to the divalent anion:Na+ symporter (DASS) superfamily. Na+/sulfate symporter (TC 2.A.47.4) family.

It localises to the cell membrane. Functionally, na(+)/sulfate cotransporter with a probable high-affinity for sulfate and a proteasome dependent turnover. This chain is Sodium/sulfate cotransporter 2 (SLT2), found in Chlamydomonas reinhardtii (Chlamydomonas smithii).